Reading from the N-terminus, the 375-residue chain is 23S rRNA (uracil(747)-C(5))-methyltransferase RlmC (375 aa).

[4Fe-4S] cluster-binding residues include C3, C11, C14, and C87. Residues Q212, F241, E262, and N307 each coordinate S-adenosyl-L-methionine. Residue C334 is the Nucleophile of the active site.

The protein belongs to the class I-like SAM-binding methyltransferase superfamily. RNA M5U methyltransferase family. RlmC subfamily.

The enzyme catalyses uridine(747) in 23S rRNA + S-adenosyl-L-methionine = 5-methyluridine(747) in 23S rRNA + S-adenosyl-L-homocysteine + H(+). Functionally, catalyzes the formation of 5-methyl-uridine at position 747 (m5U747) in 23S rRNA. The sequence is that of 23S rRNA (uracil(747)-C(5))-methyltransferase RlmC from Escherichia coli O45:K1 (strain S88 / ExPEC).